We begin with the raw amino-acid sequence, 185 residues long: MQDKEFKIAIIGPENAGKSSIMNALFGKYVSLVSEVGGTTKMPIKRYWGKLKIGRIKEEPEFVNLVFVDLGGLYTTTDKQSPIMTPKVLEKTFEEINDSDMIIHVIDGSVGLLRSFERLHHLLKFRYQKPIIVVINKCDLLNDSDKEHLKNYVERRIKNTPIFVSAKTFEGIPELLDIIIKYLKR.

The G domain maps to 17–137; the sequence is GKSSIMNALF…QKPIIVVINK (121 aa).

This is an uncharacterized protein from Methanocaldococcus jannaschii (strain ATCC 43067 / DSM 2661 / JAL-1 / JCM 10045 / NBRC 100440) (Methanococcus jannaschii).